The sequence spans 159 residues: Large ribosomal subunit protein uL22c (159 aa).

Belongs to the universal ribosomal protein uL22 family. Part of the 50S ribosomal subunit.

The protein resides in the plastid. Its subcellular location is the chloroplast. In terms of biological role, this protein binds specifically to 23S rRNA. Its function is as follows. The globular domain of the protein is located near the polypeptide exit tunnel on the outside of the subunit, while an extended beta-hairpin is found that lines the wall of the exit tunnel in the center of the 70S ribosome. The protein is Large ribosomal subunit protein uL22c (rpl22) of Ipomoea purpurea (Common morning glory).